A 473-amino-acid polypeptide reads, in one-letter code: Photosystem II CP43 reaction center protein (473 aa).

The propeptide occupies 1–14 (MKTLYSLRRFYHVE). Position 15 is an N-acetylthreonine (T15). T15 bears the Phosphothreonine mark. 5 helical membrane passes run 69–93 (LFEV…PHLA), 134–155 (LLGP…KDRN), 178–200 (KALY…RKIT), 255–275 (KPFA…LSYS), and 291–312 (WFNN…ASQA). A [CaMn4O5] cluster-binding site is contributed by E367. The helical transmembrane segment at 447 to 471 (RARAAAAGFEKGIDRDFEPVLSMTP) threads the bilayer.

It belongs to the PsbB/PsbC family. PsbC subfamily. PSII is composed of 1 copy each of membrane proteins PsbA, PsbB, PsbC, PsbD, PsbE, PsbF, PsbH, PsbI, PsbJ, PsbK, PsbL, PsbM, PsbT, PsbX, PsbY, PsbZ, Psb30/Ycf12, at least 3 peripheral proteins of the oxygen-evolving complex and a large number of cofactors. It forms dimeric complexes. Binds multiple chlorophylls and provides some of the ligands for the Ca-4Mn-5O cluster of the oxygen-evolving complex. It may also provide a ligand for a Cl- that is required for oxygen evolution. PSII binds additional chlorophylls, carotenoids and specific lipids. serves as cofactor.

It is found in the plastid. The protein resides in the chloroplast thylakoid membrane. Its function is as follows. One of the components of the core complex of photosystem II (PSII). It binds chlorophyll and helps catalyze the primary light-induced photochemical processes of PSII. PSII is a light-driven water:plastoquinone oxidoreductase, using light energy to abstract electrons from H(2)O, generating O(2) and a proton gradient subsequently used for ATP formation. The chain is Photosystem II CP43 reaction center protein from Manihot esculenta (Cassava).